The chain runs to 471 residues: Trigger factor (471 aa).

In terms of domain architecture, PPIase FKBP-type spans 162–243 (GDFVVMDLVA…VSQVQEQELP (82 aa)). A disordered region spans residues 436–471 (LRPDGTIGEPEDEIEAETEIEIEPAAETDTEADTEQ). Positions 444–471 (EPEDEIEAETEIEIEPAAETDTEADTEQ) are enriched in acidic residues.

The protein belongs to the FKBP-type PPIase family. Tig subfamily.

It is found in the cytoplasm. The catalysed reaction is [protein]-peptidylproline (omega=180) = [protein]-peptidylproline (omega=0). In terms of biological role, involved in protein export. Acts as a chaperone by maintaining the newly synthesized protein in an open conformation. Functions as a peptidyl-prolyl cis-trans isomerase. The polypeptide is Trigger factor (Nocardioides sp. (strain ATCC BAA-499 / JS614)).